We begin with the raw amino-acid sequence, 590 residues long: UvrABC system protein C (590 aa).

A GIY-YIG domain is found at 15-98 (AEPGVYQFVA…VKRHQPRYNV (84 aa)). In terms of domain architecture, UVR spans 207–242 (GALADPLRREMAAAAQAEAFERAANLRDRLAVVEGF).

It belongs to the UvrC family. Interacts with UvrB in an incision complex.

It is found in the cytoplasm. Its function is as follows. The UvrABC repair system catalyzes the recognition and processing of DNA lesions. UvrC both incises the 5' and 3' sides of the lesion. The N-terminal half is responsible for the 3' incision and the C-terminal half is responsible for the 5' incision. This Halobacterium salinarum (strain ATCC 29341 / DSM 671 / R1) protein is UvrABC system protein C.